The chain runs to 619 residues: Chaperone protein HscA homolog (619 aa).

The protein belongs to the heat shock protein 70 family.

Its function is as follows. Chaperone involved in the maturation of iron-sulfur cluster-containing proteins. Has a low intrinsic ATPase activity which is markedly stimulated by HscB. This is Chaperone protein HscA homolog from Methylococcus capsulatus (strain ATCC 33009 / NCIMB 11132 / Bath).